Here is a 705-residue protein sequence, read N- to C-terminus: Choline transporter-like protein 2 (705 aa).

Residues 1–31 lie on the Cytoplasmic side of the membrane; it reads MEDQRKYGAYGTPQKYDPTFKGPIYNRGCTD. Phosphothreonine is present on threonine 12. A helical membrane pass occupies residues 32-52; that stretch reads VLCCVLLFLAIVGYVAVGLIA. The Extracellular portion of the chain corresponds to 53-231; that stretch reads WTHGDPRKVI…RIFEDYTVSW (179 aa). 2 N-linked (GlcNAc...) asparagine glycosylation sites follow: asparagine 186 and asparagine 199. A helical membrane pass occupies residues 232–252; sequence YWIVIGLVIAMVLSLLFIILL. At 253-255 the chain is on the cytoplasmic side; sequence RFL. The chain crosses the membrane as a helical span at residues 256-276; that stretch reads AGIMVWVMIVLVILVLGYGIF. Residues 277-314 are Extracellular-facing; it reads HCYMEYARLRGEAGSDISVLDLGFQTDFRVYLHLRQTW. A helical transmembrane segment spans residues 315–335; the sequence is LAFMIILSILEVIIILLLIFL. The Cytoplasmic portion of the chain corresponds to 336–363; the sequence is RKRILIAIALIKEASRAVGYVMCSLLYP. A helical transmembrane segment spans residues 364 to 384; sequence LVTFFLLCLCIAYWASTAVFL. Over 385 to 455 the chain is Extracellular; the sequence is STSNEAVYKI…IFNAFMFFWL (71 aa). An N-linked (GlcNAc...) asparagine glycan is attached at asparagine 414. A helical transmembrane segment spans residues 456-478; sequence ANFVLALGQVTLAGAFASYYWAL. At 479-503 the chain is on the cytoplasmic side; it reads RKPDDMPAFPLFAAFGRALRYHTGS. The chain crosses the membrane as a helical span at residues 504-524; sequence LAFGSLILAIVQIIRVILEYL. The Extracellular portion of the chain corresponds to 525-562; that stretch reads DQRLKAAENKFAKFLMTCLKCCFWCLEKFIKFLNRNAY. Residues 563 to 583 traverse the membrane as a helical segment; the sequence is IMIAIYGTNFCTSARNAFFLL. The Cytoplasmic segment spans residues 584 to 598; the sequence is MRNIIRVAVLDKVTD. Residues 599–619 form a helical membrane-spanning segment; sequence FLFLLGKLLIVGSVGILAFFF. Topologically, residues 620–637 are extracellular; the sequence is FTHRIRIVQDTAPPLNYY. A helical membrane pass occupies residues 638 to 658; the sequence is WVPILTVIVGSYLIAHGFFSV. Over 659–705 the chain is Cytoplasmic; the sequence is YGMCVDTLFLCFLEDLERNNGSSERPYFMSSTLKKLLNKTNKKPVES.

This sequence belongs to the CTL (choline transporter-like) family. In terms of assembly, interacts with COCH. Post-translationally, N-glycosylated; contains sialic acid. Not O-glycosylated. Expressed at high levels in lung, colon and in supporting cells of the inner ear (at protein level). Progressively lower levels in brain, tongue, liver and kidney (at protein level). In the tongue, strongly expressed in epithelial cells and in nerves within the musculature. Within the nerves, expression observed in the perineurial cells of the nerve sheath, in the Schwann cells and myelinated nerve fibers (at protein level). In the kidney, prominent expression in glomeruli in the lining of Bowman's capsule and on the mesangial cells adjacent to the vessels within the glomerulus (at protein level). Strongly expressed on the membranes of splenocytes (at protein level).

Its subcellular location is the cell membrane. It localises to the mitochondrion outer membrane. It catalyses the reaction choline(out) + n H(+)(in) = choline(in) + n H(+)(out). The catalysed reaction is ethanolamine(out) + n H(+)(in) = ethanolamine(in) + n H(+)(out). Choline/H+ antiporter, mainly in mitochodria. Also acts as a low-affinity ethanolamine/H+ antiporter, regulating the supply of extracellular ethanolamine (Etn) for the CDP-Etn pathway, redistribute intracellular Etn and balance the CDP-Cho and CDP-Etn arms of the Kennedy pathway. The polypeptide is Choline transporter-like protein 2 (SLC44A2) (Cavia porcellus (Guinea pig)).